Here is a 729-residue protein sequence, read N- to C-terminus: Rho GTPase-activating protein 28 (729 aa).

Residues 1–78 (MEVEDSGGVV…ASVDSSASME (78 aa)) are disordered. Basic residues predominate over residues 37-49 (LSRKSIPRCRRIN). Positions 63–76 (SRSNSQASVDSSAS) are enriched in low complexity. Serine 70 is subject to Phosphoserine. Residue threonine 164 is modified to Phosphothreonine. The segment at 180-234 (FGVSESPPSDSCEHATQLDGTKEEKDLPGVTKTSRPLPDDASLSSTTLSNGAQDE) is disordered. A compositionally biased stretch (polar residues) spans 221-231 (SLSSTTLSNGA). One can recognise a Rho-GAP domain in the interval 384–581 (VPLTVLLDND…LMLKYQKILW (198 aa)).

GTPase activator for the Rho-type GTPases by converting them to an inactive GDP-bound state. This Mus musculus (Mouse) protein is Rho GTPase-activating protein 28 (Arhgap28).